The chain runs to 348 residues: Protein-arginine N-acetylglucosaminyltransferase SseK2 (348 aa).

Residues 64–66 (QWF), Tyr-88, and 237–240 (YLDA) each bind UDP-N-acetyl-alpha-D-glucosamine. The DXD motif motif lies at 239–241 (DAD). Residue Asp-241 coordinates Mn(2+). Glu-271 serves as the catalytic Proton acceptor. UDP-N-acetyl-alpha-D-glucosamine is bound by residues Asn-338, Ser-340, and 345 to 348 (SSWR). Positions 338 and 340 each coordinate Mn(2+).

The protein belongs to the glycosyltransferase NleB family. It depends on Mn(2+) as a cofactor.

It localises to the secreted. The protein localises to the host Golgi apparatus. It catalyses the reaction L-arginyl-[protein] + UDP-N-acetyl-alpha-D-glucosamine = N(omega)-(N-acetyl-beta-D-glucosaminyl)-L-arginyl-[protein] + UDP + H(+). With respect to regulation, protein-arginine N-acetylglucosaminyltransferase activity is inhibited by 100066N compound (flavone analog) and 102644N compound (a substituted isoxazole). Its function is as follows. Protein-arginine N-acetylglucosaminyltransferase effector that catalyzes the transfer of a single N-acetylglucosamine (GlcNAc) to a conserved arginine residue in the death domain of host proteins such as FADD: arginine GlcNAcylation prevents homotypic/heterotypic death domain interactions. Also acts on host proteins without a death domain: catalyzes arginine GlcNAcylation of host small Rab1 GTPase, thereby preventing GTPase activity and leading to impaired host vesicular protein transport. In contrast to Ssek1, not able to disrupt TNF signaling in infected cells. The sequence is that of Protein-arginine N-acetylglucosaminyltransferase SseK2 from Salmonella typhimurium (strain SL1344).